The sequence spans 396 residues: Elongation factor Tu (396 aa).

Residues 10–206 (KPHVNVGTIG…ALDSFIPEPT (197 aa)) enclose the tr-type G domain. The segment at 19 to 26 (GHVDHGKT) is G1. 19–26 (GHVDHGKT) is a GTP binding site. Thr-26 contacts Mg(2+). The tract at residues 60–64 (GITIS) is G2. The tract at residues 81 to 84 (DCPG) is G3. Residues 81–85 (DCPGH) and 136–139 (NKAD) each bind GTP. The tract at residues 136 to 139 (NKAD) is G4. The segment at 174–176 (SAR) is G5.

The protein belongs to the TRAFAC class translation factor GTPase superfamily. Classic translation factor GTPase family. EF-Tu/EF-1A subfamily. In terms of assembly, monomer.

Its subcellular location is the cytoplasm. It catalyses the reaction GTP + H2O = GDP + phosphate + H(+). Its function is as follows. GTP hydrolase that promotes the GTP-dependent binding of aminoacyl-tRNA to the A-site of ribosomes during protein biosynthesis. The protein is Elongation factor Tu of Xanthomonas euvesicatoria pv. vesicatoria (strain 85-10) (Xanthomonas campestris pv. vesicatoria).